The primary structure comprises 375 residues: Growth/differentiation factor 8 (375 aa).

An N-terminal signal peptide occupies residues M1–L23. Residues N24–R266 constitute a propeptide that is removed on maturation. N71 carries N-linked (GlcNAc...) asparagine glycosylation. 4 disulfides stabilise this stretch: C272/C282, C281/C340, C309/C372, and C313/C374.

The protein belongs to the TGF-beta family. In terms of assembly, homodimer; disulfide-linked. Interacts with WFIKKN2, leading to inhibit its activity. Interacts with FSTL3. Post-translationally, synthesized as large precursor molecule that undergoes proteolytic cleavage to generate an N-terminal propeptide and a disulfide linked C-terminal dimer, which is the biologically active molecule. The circulating form consists of a latent complex of the C-terminal dimer and other proteins, including its propeptide, which maintain the C-terminal dimer in a latent, inactive state. Ligand activation requires additional cleavage of the prodomain by a tolloid-like metalloproteinase.

It localises to the secreted. In terms of biological role, acts specifically as a negative regulator of skeletal muscle growth. In Pan paniscus (Pygmy chimpanzee), this protein is Growth/differentiation factor 8 (MSTN).